The sequence spans 1154 residues: Voltage-dependent calcium channel subunit alpha-2/delta-2 (1154 aa).

The N-terminal stretch at 1–18 is a signal peptide; the sequence is MAVPARTCGASWPGPVRT. A disordered region spans residues 1 to 37; that stretch reads MAVPARTCGASWPGPVRTARPWPGRGPRPCPDPRGPA. The Extracellular portion of the chain corresponds to 19-1116; sequence ARPWPGRGPR…TEDTSDCGRG (1098 aa). Over residues 24 to 34 the composition is skewed to pro residues; the sequence is GRGPRPCPDPR. Residue N205 is glycosylated (N-linked (GlcNAc...) asparagine). The VWFA domain occupies 294 to 472; sequence DMVIIVDVSG…INTQEYLDVL (179 aa). A divalent metal cation-binding residues include D300, S302, and S304. The MIDAS-like motif signature appears at 300 to 304; it reads DVSGS. 6 N-linked (GlcNAc...) asparagine glycosylation sites follow: N389, N421, N510, N543, N627, and N864. Residues C446 and C1101 are joined by a disulfide bond. A Cache domain is found at 488–577; that stretch reads WTNVYEDALG…KPQTTNFREP (90 aa). A helical transmembrane segment spans residues 1117-1137; that stretch reads ASFPPSLGVLVSLQLLLLLGL. Over 1138–1154 the chain is Cytoplasmic; sequence PPRPQPQVHSFAASRHL.

This sequence belongs to the calcium channel subunit alpha-2/delta family. Dimer formed of alpha-2-2 and delta-2 chains; disulfide-linked. Voltage-dependent calcium channels are multisubunit complexes, consisting of alpha-1 (CACNA1), alpha-2 (CACNA2D), beta (CACNB) and delta (CACNA2D) subunits in a 1:1:1:1 ratio. In terms of processing, N-glycosylated. May be proteolytically processed into subunits alpha-2-2 and delta-2 that are disulfide-linked. It is however unclear whether such cleavage really takes place in vivo and has a functional role. According to PubMed:11306709, it is processed, at least in vitro, while according to PubMed:17052222, it is only poorly processed in vivo. Predominantly expressed in brain in a restricted pattern. Also expressed at lower level in kidney and testis Not expressed in lung at any moment of development. In brain, it localizes to sections of P21 brain. Expressed at high level in the cerebellum, with moderate levels in medulla, pons, and striatum. Also expressed in cortex, hippocampus, habenula and nucleus reticularis thalami (nRT). Strongly expressed in cerebellar Purkinje cells.

The protein localises to the membrane. In terms of biological role, the alpha-2/delta subunit of voltage-dependent calcium channels regulates calcium current density and activation/inactivation kinetics of the calcium channel. Acts as a regulatory subunit for P/Q-type calcium channel (CACNA1A), N-type (CACNA1B), L-type (CACNA1C OR CACNA1D) and possibly T-type (CACNA1G). This chain is Voltage-dependent calcium channel subunit alpha-2/delta-2 (Cacna2d2), found in Mus musculus (Mouse).